Consider the following 285-residue polypeptide: Bifunctional protein FolD (285 aa).

Residues 166-168 (GAS) and Ile232 each bind NADP(+).

It belongs to the tetrahydrofolate dehydrogenase/cyclohydrolase family. In terms of assembly, homodimer.

It carries out the reaction (6R)-5,10-methylene-5,6,7,8-tetrahydrofolate + NADP(+) = (6R)-5,10-methenyltetrahydrofolate + NADPH. The enzyme catalyses (6R)-5,10-methenyltetrahydrofolate + H2O = (6R)-10-formyltetrahydrofolate + H(+). It functions in the pathway one-carbon metabolism; tetrahydrofolate interconversion. Its function is as follows. Catalyzes the oxidation of 5,10-methylenetetrahydrofolate to 5,10-methenyltetrahydrofolate and then the hydrolysis of 5,10-methenyltetrahydrofolate to 10-formyltetrahydrofolate. The protein is Bifunctional protein FolD of Vibrio atlanticus (strain LGP32) (Vibrio splendidus (strain Mel32)).